We begin with the raw amino-acid sequence, 217 residues long: Somatotropin (217 aa).

The signal sequence occupies residues 1 to 26 (MAPGSRTSLLLAFGLLCLPWLQEGSA). H44 provides a ligand contact to Zn(2+). An intrachain disulfide couples C79 to C191. S132 is subject to Phosphoserine. Residue E200 coordinates Zn(2+). C208 and C215 are oxidised to a cystine.

This sequence belongs to the somatotropin/prolactin family.

The protein resides in the secreted. In terms of biological role, plays an important role in growth control. Its major role in stimulating body growth is to stimulate the liver and other tissues to secrete IGF1. It stimulates both the differentiation and proliferation of myoblasts. It also stimulates amino acid uptake and protein synthesis in muscle and other tissues. The protein is Somatotropin (GH1) of Pan troglodytes (Chimpanzee).